Consider the following 78-residue polypeptide: NAD(P)H-quinone oxidoreductase subunit L (78 aa).

Helical transmembrane passes span 10 to 30 and 47 to 67; these read IILI…PAIV and VFMY…SPFL.

Belongs to the complex I NdhL subunit family. NDH-1 can be composed of about 15 different subunits; different subcomplexes with different compositions have been identified which probably have different functions.

It is found in the cellular thylakoid membrane. The enzyme catalyses a plastoquinone + NADH + (n+1) H(+)(in) = a plastoquinol + NAD(+) + n H(+)(out). The catalysed reaction is a plastoquinone + NADPH + (n+1) H(+)(in) = a plastoquinol + NADP(+) + n H(+)(out). In terms of biological role, NDH-1 shuttles electrons from an unknown electron donor, via FMN and iron-sulfur (Fe-S) centers, to quinones in the respiratory and/or the photosynthetic chain. The immediate electron acceptor for the enzyme in this species is believed to be plastoquinone. Couples the redox reaction to proton translocation, and thus conserves the redox energy in a proton gradient. Cyanobacterial NDH-1 also plays a role in inorganic carbon-concentration. The polypeptide is NAD(P)H-quinone oxidoreductase subunit L (Trichodesmium erythraeum (strain IMS101)).